Here is a 262-residue protein sequence, read N- to C-terminus: Type III pantothenate kinase (262 aa).

12–19 (DIGNTSIA) contacts ATP. Residues tyrosine 94 and 109–112 (GSDV) each bind substrate. The active-site Proton acceptor is aspartate 111. Aspartate 132 provides a ligand contact to K(+). Threonine 135 provides a ligand contact to ATP. Threonine 187 serves as a coordination point for substrate.

It belongs to the type III pantothenate kinase family. In terms of assembly, homodimer. It depends on NH4(+) as a cofactor. Requires K(+) as cofactor.

It is found in the cytoplasm. It carries out the reaction (R)-pantothenate + ATP = (R)-4'-phosphopantothenate + ADP + H(+). Its pathway is cofactor biosynthesis; coenzyme A biosynthesis; CoA from (R)-pantothenate: step 1/5. In terms of biological role, catalyzes the phosphorylation of pantothenate (Pan), the first step in CoA biosynthesis. This chain is Type III pantothenate kinase, found in Borrelia garinii subsp. bavariensis (strain ATCC BAA-2496 / DSM 23469 / PBi) (Borreliella bavariensis).